The chain runs to 396 residues: Elongation factor Tu (396 aa).

In terms of domain architecture, tr-type G spans 10–206; the sequence is KPHCNIGTIG…TVDAYIPQPE (197 aa). A G1 region spans residues 19 to 26; sequence GHVDHGKT. 19 to 26 serves as a coordination point for GTP; the sequence is GHVDHGKT. Position 26 (Thr26) interacts with Mg(2+). The tract at residues 60 to 64 is G2; sequence GITIS. The segment at 81 to 84 is G3; sequence DCPG. Residues 81-85 and 136-139 each bind GTP; these read DCPGH and NKVD. The segment at 136 to 139 is G4; it reads NKVD. Residues 174–176 are G5; it reads SAL.

It belongs to the TRAFAC class translation factor GTPase superfamily. Classic translation factor GTPase family. EF-Tu/EF-1A subfamily. In terms of assembly, monomer.

The protein localises to the cytoplasm. It carries out the reaction GTP + H2O = GDP + phosphate + H(+). Functionally, GTP hydrolase that promotes the GTP-dependent binding of aminoacyl-tRNA to the A-site of ribosomes during protein biosynthesis. The protein is Elongation factor Tu of Methylocella silvestris (strain DSM 15510 / CIP 108128 / LMG 27833 / NCIMB 13906 / BL2).